A 115-amino-acid polypeptide reads, in one-letter code: Large ribosomal subunit protein bL20c (115 aa).

It belongs to the bacterial ribosomal protein bL20 family.

It localises to the plastid. The protein localises to the chloroplast. Its function is as follows. Binds directly to 23S ribosomal RNA and is necessary for the in vitro assembly process of the 50S ribosomal subunit. It is not involved in the protein synthesizing functions of that subunit. This is Large ribosomal subunit protein bL20c from Chaetosphaeridium globosum (Charophycean green alga).